Here is a 248-residue protein sequence, read N- to C-terminus: MYKLVLIRHGESTWNKENRFTGWVDVDLTEQGRNEAYQAGELLKEAGYTFDIAYTSVLKRAIRTLWHVQDKMDLMYLPVVHSWRLNERHYGALSGLNKAETAAKFGDEQVLVWRRSYDTPPPALEPTDERAPFNDPRYAKVPREQLPLTECLKDTVARVLPLWNESIAPAVRAGKQVLIAAHGNSLRALIKYLDGISDSDIVGLNIPNGVPLVYELDENLKPIKHYYLGDQDAIAQAQAAVAKQGKAG.

Substrate contacts are provided by residues 8 to 15 (RHGESTWN), 21 to 22 (TG), Arg60, 87 to 90 (ERHY), Lys98, 114 to 115 (RR), and 183 to 184 (GN). His9 serves as the catalytic Tele-phosphohistidine intermediate. Catalysis depends on Glu87, which acts as the Proton donor/acceptor.

Belongs to the phosphoglycerate mutase family. BPG-dependent PGAM subfamily. As to quaternary structure, homodimer.

It catalyses the reaction (2R)-2-phosphoglycerate = (2R)-3-phosphoglycerate. It functions in the pathway carbohydrate degradation; glycolysis; pyruvate from D-glyceraldehyde 3-phosphate: step 3/5. Functionally, catalyzes the interconversion of 2-phosphoglycerate and 3-phosphoglycerate. The chain is 2,3-bisphosphoglycerate-dependent phosphoglycerate mutase from Burkholderia orbicola (strain MC0-3).